A 218-amino-acid polypeptide reads, in one-letter code: Ribose-5-phosphate isomerase A (218 aa).

Residues 27–30 (TGST), 80–83 (DGAD), and 93–96 (KGGG) contribute to the substrate site. Glu102 acts as the Proton acceptor in catalysis. A substrate-binding site is contributed by Lys120.

Belongs to the ribose 5-phosphate isomerase family. As to quaternary structure, homodimer.

It carries out the reaction aldehydo-D-ribose 5-phosphate = D-ribulose 5-phosphate. The protein operates within carbohydrate degradation; pentose phosphate pathway; D-ribose 5-phosphate from D-ribulose 5-phosphate (non-oxidative stage): step 1/1. Catalyzes the reversible conversion of ribose-5-phosphate to ribulose 5-phosphate. In Picrophilus torridus (strain ATCC 700027 / DSM 9790 / JCM 10055 / NBRC 100828 / KAW 2/3), this protein is Ribose-5-phosphate isomerase A.